Here is a 244-residue protein sequence, read N- to C-terminus: Putative lipoprotein LprA (244 aa).

A signal peptide spans 1-24 (MKHPPCSVVAAATAILAVVLAIGG). Residue C25 is the site of N-palmitoyl cysteine attachment. C25 is lipidated: S-diacylglycerol cysteine.

This sequence belongs to the LppX/LprAFG lipoprotein family.

It is found in the cell membrane. This chain is Putative lipoprotein LprA (lprA), found in Mycobacterium tuberculosis (strain CDC 1551 / Oshkosh).